The following is a 542-amino-acid chain: Chitinase 2 (542 aa).

An N-terminal signal peptide occupies residues 1-22 (MLTRTFLGMAISAFLASTGVQA). Residues 29 to 314 (PNVMYYWGQN…SQLYSLVHSG (286 aa)) form the GH18 domain. Catalysis depends on glutamate 166, which acts as the Proton donor. The tract at residues 312–356 (HSGGSTPPPPSSSSATKTTTKTTATSTKTTTTTAPTATSTPGSCP) is disordered. Positions 323-354 (SSSATKTTTKTTATSTKTTTTTAPTATSTPGS) are enriched in low complexity. Residues 355–406 (CPVANQPCSTQNQYACTADGKYAVCDHGKWVASSCPSNTVCIPTTDGASIYC) are chitin-binding, high affinity. Positions 447 to 542 (AQLAVTSTDK…APSTSAWNFK (96 aa)) are excised as a propeptide.

It belongs to the glycosyl hydrolase 18 family. Chitinase class III subfamily. Monomer. In terms of processing, O-glycosylated.

It is found in the secreted. It catalyses the reaction Random endo-hydrolysis of N-acetyl-beta-D-glucosaminide (1-&gt;4)-beta-linkages in chitin and chitodextrins.. Functionally, probably involved in the apical growth and branching of fungal hyphae. The chain is Chitinase 2 (CHI2) from Rhizopus oligosporus (Rhizopus microsporus var. oligosporus).